The primary structure comprises 404 residues: uncharacterized protein (404 aa).

The N-terminal stretch at 1–21 (MRKLGLALSIMGLLLVSIVAG) is a signal peptide. The residue at position 22 (C22) is an N-acetylcysteine. C22 carries S-archaeol cysteine lipidation.

This sequence belongs to the BMP lipoprotein family.

Its subcellular location is the cell membrane. This is an uncharacterized protein from Pyrococcus abyssi (strain GE5 / Orsay).